Reading from the N-terminus, the 144-residue chain is Cell division protein SepF (144 aa).

Belongs to the SepF family. In terms of assembly, homodimer. Interacts with FtsZ.

It is found in the cytoplasm. Its function is as follows. Cell division protein that is part of the divisome complex and is recruited early to the Z-ring. Probably stimulates Z-ring formation, perhaps through the cross-linking of FtsZ protofilaments. Its function overlaps with FtsA. The sequence is that of Cell division protein SepF from Geobacillus sp. (strain WCH70).